Consider the following 602-residue polypeptide: Elongation factor 4 (602 aa).

Positions 7–188 (ENIRNFSIIA…SIIRLVPPPK (182 aa)) constitute a tr-type G domain. GTP-binding positions include 19–24 (DHGKST) and 135–138 (NKID).

Belongs to the TRAFAC class translation factor GTPase superfamily. Classic translation factor GTPase family. LepA subfamily.

It is found in the cell inner membrane. It carries out the reaction GTP + H2O = GDP + phosphate + H(+). Functionally, required for accurate and efficient protein synthesis under certain stress conditions. May act as a fidelity factor of the translation reaction, by catalyzing a one-codon backward translocation of tRNAs on improperly translocated ribosomes. Back-translocation proceeds from a post-translocation (POST) complex to a pre-translocation (PRE) complex, thus giving elongation factor G a second chance to translocate the tRNAs correctly. Binds to ribosomes in a GTP-dependent manner. In Chlamydia trachomatis serovar D (strain ATCC VR-885 / DSM 19411 / UW-3/Cx), this protein is Elongation factor 4.